Here is an 86-residue protein sequence, read N- to C-terminus: Putative antitoxin VapB36 (86 aa).

Functionally, possibly the antitoxin component of a type II toxin-antitoxin (TA) system. Its cognate toxin is VapC36 (Potential). This Mycobacterium tuberculosis (strain CDC 1551 / Oshkosh) protein is Putative antitoxin VapB36 (vapB36).